Reading from the N-terminus, the 479-residue chain is Aspartyl/glutamyl-tRNA(Asn/Gln) amidotransferase subunit B (479 aa).

This sequence belongs to the GatB/GatE family. GatB subfamily. Heterotrimer of A, B and C subunits.

The catalysed reaction is L-glutamyl-tRNA(Gln) + L-glutamine + ATP + H2O = L-glutaminyl-tRNA(Gln) + L-glutamate + ADP + phosphate + H(+). It catalyses the reaction L-aspartyl-tRNA(Asn) + L-glutamine + ATP + H2O = L-asparaginyl-tRNA(Asn) + L-glutamate + ADP + phosphate + 2 H(+). Functionally, allows the formation of correctly charged Asn-tRNA(Asn) or Gln-tRNA(Gln) through the transamidation of misacylated Asp-tRNA(Asn) or Glu-tRNA(Gln) in organisms which lack either or both of asparaginyl-tRNA or glutaminyl-tRNA synthetases. The reaction takes place in the presence of glutamine and ATP through an activated phospho-Asp-tRNA(Asn) or phospho-Glu-tRNA(Gln). The sequence is that of Aspartyl/glutamyl-tRNA(Asn/Gln) amidotransferase subunit B from Streptococcus pyogenes serotype M5 (strain Manfredo).